The sequence spans 952 residues: Leucine--tRNA ligase (952 aa).

The 'HIGH' region signature appears at 65 to 76; sequence PYPSGAGLHVGH. A 'KMSKS' region motif is present at residues 727-731; that stretch reads KMGKS. Lys730 is a binding site for ATP.

The protein belongs to the class-I aminoacyl-tRNA synthetase family.

Its subcellular location is the cytoplasm. It carries out the reaction tRNA(Leu) + L-leucine + ATP = L-leucyl-tRNA(Leu) + AMP + diphosphate. The protein is Leucine--tRNA ligase of Salinispora arenicola (strain CNS-205).